The sequence spans 896 residues: Microsomal triglyceride transfer protein large subunit (896 aa).

Positions 1 to 21 (MILLAVLFLCFFSSYSASVKG) are cleaved as a signal peptide. Residues 28-659 (LNNERLYKLT…IFQYIGKAEL (632 aa)) enclose the Vitellogenin domain. Cysteine 174 and cysteine 194 are oxidised to a cystine.

Heterodimer; heterodimerizes with the protein disulfide isomerase (P4HB/PDI). Interacts with APOB. Interacts with PRAP1.

It localises to the endoplasmic reticulum. Its subcellular location is the golgi apparatus. It carries out the reaction a 1,2-diacyl-sn-glycero-3-phosphocholine(in) = a 1,2-diacyl-sn-glycero-3-phosphocholine(out). The catalysed reaction is a 1,2-diacyl-sn-glycero-3-phosphoethanolamine(in) = a 1,2-diacyl-sn-glycero-3-phosphoethanolamine(out). The enzyme catalyses a cholesterol ester(in) = a cholesterol ester(out). It catalyses the reaction a triacyl-sn-glycerol(in) = a triacyl-sn-glycerol(out). Catalyzes the transport of triglyceride, cholesteryl ester, and phospholipid between phospholipid surfaces. Required for the assembly and secretion of plasma lipoproteins that contain apolipoprotein B. May be involved in regulating cholesteryl ester biosynthesis in cells that produce lipoproteins. The sequence is that of Microsomal triglyceride transfer protein large subunit (Mttp) from Rattus norvegicus (Rat).